We begin with the raw amino-acid sequence, 210 residues long: Large ribosomal subunit protein uL4 (210 aa).

Positions Lys44–Arg54 are enriched in polar residues. Residues Lys44 to Pro94 form a disordered region. Over residues Gly60–Gly71 the composition is skewed to basic residues.

The protein belongs to the universal ribosomal protein uL4 family. In terms of assembly, part of the 50S ribosomal subunit.

Functionally, one of the primary rRNA binding proteins, this protein initially binds near the 5'-end of the 23S rRNA. It is important during the early stages of 50S assembly. It makes multiple contacts with different domains of the 23S rRNA in the assembled 50S subunit and ribosome. Its function is as follows. Forms part of the polypeptide exit tunnel. This Prochlorococcus marinus subsp. pastoris (strain CCMP1986 / NIES-2087 / MED4) protein is Large ribosomal subunit protein uL4.